A 379-amino-acid polypeptide reads, in one-letter code: Cytochrome b (379 aa).

Helical transmembrane passes span phenylalanine 33 to methionine 53, tryptophan 77 to valine 98, tryptophan 113 to leucine 133, and phenylalanine 178 to leucine 198. Histidine 83 and histidine 97 together coordinate heme b. Heme b is bound by residues histidine 182 and histidine 196. Histidine 201 lines the a ubiquinone pocket. The next 4 membrane-spanning stretches (helical) occupy residues threonine 226–tyrosine 246, leucine 288–glutamine 308, leucine 320–glycine 340, and phenylalanine 347–proline 367.

It belongs to the cytochrome b family. The cytochrome bc1 complex contains 11 subunits: 3 respiratory subunits (MT-CYB, CYC1 and UQCRFS1), 2 core proteins (UQCRC1 and UQCRC2) and 6 low-molecular weight proteins (UQCRH/QCR6, UQCRB/QCR7, UQCRQ/QCR8, UQCR10/QCR9, UQCR11/QCR10 and a cleavage product of UQCRFS1). This cytochrome bc1 complex then forms a dimer. Heme b is required as a cofactor.

The protein localises to the mitochondrion inner membrane. Component of the ubiquinol-cytochrome c reductase complex (complex III or cytochrome b-c1 complex) that is part of the mitochondrial respiratory chain. The b-c1 complex mediates electron transfer from ubiquinol to cytochrome c. Contributes to the generation of a proton gradient across the mitochondrial membrane that is then used for ATP synthesis. In Lepilemur randrianasoloi (Randrianasoli's sportive lemur), this protein is Cytochrome b (MT-CYB).